A 98-amino-acid polypeptide reads, in one-letter code: NADH-ubiquinone oxidoreductase chain 4L (98 aa).

Helical transmembrane passes span 1–21, 29–49, and 59–79; these read MTAI…GVLV, TLLC…LLIT, and LPLT…ALLV.

The protein belongs to the complex I subunit 4L family. Core subunit of respiratory chain NADH dehydrogenase (Complex I) which is composed of 45 different subunits.

The protein resides in the mitochondrion inner membrane. The enzyme catalyses a ubiquinone + NADH + 5 H(+)(in) = a ubiquinol + NAD(+) + 4 H(+)(out). Functionally, core subunit of the mitochondrial membrane respiratory chain NADH dehydrogenase (Complex I) which catalyzes electron transfer from NADH through the respiratory chain, using ubiquinone as an electron acceptor. Part of the enzyme membrane arm which is embedded in the lipid bilayer and involved in proton translocation. The chain is NADH-ubiquinone oxidoreductase chain 4L (MT-ND4L) from Notoryctes typhlops (Southern marsupial mole).